A 423-amino-acid polypeptide reads, in one-letter code: Protein phosphatase 2C 77 (423 aa).

Residues 74–95 (GDEINGSDEFDPRSMNQSEKKV) form a disordered region. A PPM-type phosphatase domain is found at 112-411 (LYGVTSICGR…DNISVVVVDL (300 aa)). Residues D165, D251, and S252 each contribute to the Mg(2+) site. An intrachain disulfide couples C257 to C331. 2 residues coordinate Mg(2+): D337 and D402.

The protein belongs to the PP2C family. As to quaternary structure, interacts with SPK1, CIPK15/PKS3, GPX3, SCAR1, SCAR2, SCAR3 and SCARL. Also interacts with CIPK24/SOS2. Binds to the fibrillin precursor protein. Interacts with ABA-bounded PYR1, PYL1, PYL2, PYL3, PYL4, PYL5, PYL6, PYL8 and PYL9, and with free PYL2, PYL3 and PYL4. Interacts with and represses GHR1, and, to a lesser extent, SRK2E/OST1. Mg(2+) is required as a cofactor. Mn(2+) serves as cofactor.

The enzyme catalyses O-phospho-L-seryl-[protein] + H2O = L-seryl-[protein] + phosphate. It carries out the reaction O-phospho-L-threonyl-[protein] + H2O = L-threonyl-[protein] + phosphate. Its activity is regulated as follows. Phosphatase activity repressed by oxidized ATGPX3, free fatty acids (e.g. arachidonic acid (20:4) and Linolenic acid (18:3)) and by H(2)O(2). Repressed by PYR/PYL/RCAR ABA receptors in an ABA-dependent manner. In terms of biological role, repressor of the abscisic acid (ABA) signaling pathway that regulates numerous ABA responses, such as stomatal closure, osmotic water permeability of the plasma membrane (Pos), high light stress, response to glucose, seed germination and inhibition of vegetative growth. During the stomatal closure regulation, modulates the inward calcium-channel permeability as well as H(2)O(2) and oxidative burst in response to ABA and dehydration. Represses GHR1 and, to some extent, SRK2E/OST1, kinases involved in the regulation of SLAC1-dependent stomatal closure. Controls negatively fibrillin that is involved in mediating ABA-induced photoprotection. May be implicated in ABA content regulation. Involved in acquired thermotolerance of root growth and seedling survival. Required for the Erwinia amylovora harpin-induced (HrpN) drought tolerance. Involved in the hydrotropic response. The protein is Protein phosphatase 2C 77 of Arabidopsis thaliana (Mouse-ear cress).